The primary structure comprises 484 residues: tRNA sulfurtransferase (484 aa).

The 105-residue stretch at 63–167 (QAFGERLACI…GDKLYMVTKR (105 aa)) folds into the THUMP domain. ATP-binding positions include 185-186 (LI), Lys-267, Gly-289, and Gln-298. Cys-346 and Cys-458 are oxidised to a cystine. The Rhodanese domain occupies 406 to 484 (IDTNEVVIDI…GYHNVKVYRP (79 aa)). The active-site Cysteine persulfide intermediate is the Cys-458.

The protein belongs to the ThiI family.

The protein resides in the cytoplasm. It carries out the reaction [ThiI sulfur-carrier protein]-S-sulfanyl-L-cysteine + a uridine in tRNA + 2 reduced [2Fe-2S]-[ferredoxin] + ATP + H(+) = [ThiI sulfur-carrier protein]-L-cysteine + a 4-thiouridine in tRNA + 2 oxidized [2Fe-2S]-[ferredoxin] + AMP + diphosphate. It catalyses the reaction [ThiS sulfur-carrier protein]-C-terminal Gly-Gly-AMP + S-sulfanyl-L-cysteinyl-[cysteine desulfurase] + AH2 = [ThiS sulfur-carrier protein]-C-terminal-Gly-aminoethanethioate + L-cysteinyl-[cysteine desulfurase] + A + AMP + 2 H(+). It participates in cofactor biosynthesis; thiamine diphosphate biosynthesis. Catalyzes the ATP-dependent transfer of a sulfur to tRNA to produce 4-thiouridine in position 8 of tRNAs, which functions as a near-UV photosensor. Also catalyzes the transfer of sulfur to the sulfur carrier protein ThiS, forming ThiS-thiocarboxylate. This is a step in the synthesis of thiazole, in the thiamine biosynthesis pathway. The sulfur is donated as persulfide by IscS. In Shewanella oneidensis (strain ATCC 700550 / JCM 31522 / CIP 106686 / LMG 19005 / NCIMB 14063 / MR-1), this protein is tRNA sulfurtransferase.